Here is a 355-residue protein sequence, read N- to C-terminus: MGFFADLFKVVYSTWRQYIYTTGALLTLTWKWFTEGNEYFVEHVYPEPECLKNWNHKFVQLKNIRMHYVEEGPADGDVLLMVHGFPEFWYSWRFQLEHFKHTHRCIAIDMRGYNTTDRPSGISDYNLTHLVEDIRQFIEILELKRVTLAAHDWGAIVCWRVAMLHSNLIDRLVICNVPHPFAFFEVYNMSKEQRNKSWYIYLFQSQYIPEIAMRSNKMKMLEAMFRGSKAGIRNSENFTDEDMLAWKHVFSQPGGTTGPLNYYRDLFNAPAIPRKLQIVQPKVLILWGDEDAFLDKKGAELSVQFCRDCRVQMIRGASHWVQQDQPQLVNVYMEQFMNEDSYRPIGEIKTFKSHL.

The AB hydrolase-1 domain occupies 78-323 (VLLMVHGFPE…IRGASHWVQQ (246 aa)). The active-site Nucleophile is Asp152. The active-site Proton donor is the Tyr263. The active-site Proton acceptor is His319.

The protein belongs to the AB hydrolase superfamily. Epoxide hydrolase family.

It carries out the reaction an epoxide + H2O = an ethanediol. It participates in lipid metabolism. Catalyzes the hydrolysis of epoxide-containing fatty acids. Active in vitro against trans-1,3-diphenylpropene oxide (t-DPPO), epoxyeicosatrienoic acids (EETs) including 8,9-EET, 11,12-EET and 14,15-EET and the linoleic acid metabolites 12,13-epoxy-9-octadecenoate (12,13-EpOME) and 9,10-epoxy-12-octadecenoate (9,10-EpOME). This Caenorhabditis elegans protein is Epoxide hydrolase 2.